The primary structure comprises 528 residues: Light-independent protochlorophyllide reductase subunit B (528 aa).

Position 36 (Asp36) interacts with [4Fe-4S] cluster. Catalysis depends on Asp274, which acts as the Proton donor. Position 409 to 410 (409 to 410 (GL)) interacts with substrate. Positions 429 to 471 (GPSHHGGHAPKPMHDAPAASAAAGAEASMAEETAAPSQDAPAA) are disordered. Positions 444 to 465 (APAASAAAGAEASMAEETAAPS) are enriched in low complexity.

Belongs to the ChlB/BchB/BchZ family. As to quaternary structure, protochlorophyllide reductase is composed of three subunits; BchL, BchN and BchB. Forms a heterotetramer of two BchB and two BchN subunits. The cofactor is [4Fe-4S] cluster.

The catalysed reaction is chlorophyllide a + oxidized 2[4Fe-4S]-[ferredoxin] + 2 ADP + 2 phosphate = protochlorophyllide a + reduced 2[4Fe-4S]-[ferredoxin] + 2 ATP + 2 H2O. It participates in porphyrin-containing compound metabolism; bacteriochlorophyll biosynthesis (light-independent). Component of the dark-operative protochlorophyllide reductase (DPOR) that uses Mg-ATP and reduced ferredoxin to reduce ring D of protochlorophyllide (Pchlide) to form chlorophyllide a (Chlide). This reaction is light-independent. The NB-protein (BchN-BchB) is the catalytic component of the complex. This Dinoroseobacter shibae (strain DSM 16493 / NCIMB 14021 / DFL 12) protein is Light-independent protochlorophyllide reductase subunit B.